The chain runs to 116 residues: Large ribosomal subunit protein bL17 (116 aa).

The protein belongs to the bacterial ribosomal protein bL17 family. In terms of assembly, part of the 50S ribosomal subunit. Contacts protein L32.

The polypeptide is Large ribosomal subunit protein bL17 (Synechococcus sp. (strain RCC307)).